The sequence spans 1082 residues: TNF receptor-associated factor homolog 1b (1082 aa).

Residues 1–54 (MAEAVDEDSGVGRSLEESSNGQHSQAGEALSEWRSSGQVENGTPSTSPSYWDID) form a disordered region. Position 2 is an N-acetylalanine (Ala2). A compositionally biased stretch (polar residues) spans 33 to 49 (WRSSGQVENGTPSTSPS). In terms of domain architecture, MATH spans 67 to 198 (YGQYTWKIPK…SGCLTIEAKV (132 aa)). Disordered regions lie at residues 358 to 388 (LPPK…ERDE), 440 to 666 (TEQR…SNVG), 697 to 762 (SIVN…QVVL), 780 to 800 (LSAP…APII), 812 to 841 (SSVQ…NQQT), and 858 to 889 (SSSS…PTSS). 2 stretches are compositionally biased toward basic and acidic residues: residues 359–388 (PPKD…ERDE) and 440–453 (TEQR…EREK). A coiled-coil region spans residues 446–507 (RGAAEREKKS…EEEKDSVTEK (62 aa)). Residues 454-471 (KSKKKQAKQKRNKNKGKD) show a composition bias toward basic residues. A compositionally biased stretch (basic and acidic residues) spans 472-488 (KRKEEKVSFATHAKDLE). Low complexity-rich tracts occupy residues 519–534 (GDVS…SADI) and 560–573 (SSEG…ISIS). 2 stretches are compositionally biased toward polar residues: residues 588 to 630 (DDSS…QQVK) and 645 to 666 (QPST…SNVG). 2 stretches are compositionally biased toward low complexity: residues 858 to 871 (SSSS…SSHG) and 878 to 889 (PSSSYSQAPTSS).

As to quaternary structure, forms homooligomers. Interacts with SNC1, RPS2 and CPR1/CPR30. Interacts with ATG6.

The protein localises to the cytoplasm. The protein resides in the cell membrane. Its function is as follows. Functions redundantly with TRAF1A in the regulation of plant immune response. Contributes to the turnover of the nucleotide-binding domain and leucine-rich repeat-containing (NB-LRR) immune receptors SNC1 and RPS2. May associate with an E3 ubiquitin-protein ligase complex, which modulates ubiquitination and subsequent degradation of NB-LRR immune sensors to maintain their homeostasis. Functions redundantly with TRAF1A in the regulation of autophagosome formation. Required for SINAT1- and SINAT2-mediated ubiquitination and destabilization of ATG6. Functions as a molecular adapter that helps to regulate autophagy by modulating ATG6 stability. In Arabidopsis thaliana (Mouse-ear cress), this protein is TNF receptor-associated factor homolog 1b.